The primary structure comprises 204 residues: MHLMLVLLGLAALLGTSQSQTGCYGVVNRIDTTGASCETAKPEKLNYCGVAASRMIAERDLRSMDRYKTLIKKVGQKLCVDPAVIAGIISRESHAGKALKNGWGDNGNGFGLMQVDKRSHTPVGEWNGERHLTQGTEILISMIKKIQKKFPRWTKEQQLKGGISAYNAGSGNVRSYERMDIGTTHNDYANDVVARAQYYKQHGY.

Residues 1 to 19 (MHLMLVLLGLAALLGTSQS) form the signal peptide. Intrachain disulfides connect Cys23/Cys79 and Cys37/Cys48. Active-site residues include Glu92 and Asp105.

This sequence belongs to the glycosyl hydrolase 23 family.

The protein resides in the secreted. It catalyses the reaction Hydrolysis of (1-&gt;4)-beta-linkages between N-acetylmuramic acid and N-acetyl-D-glucosamine residues in a peptidoglycan and between N-acetyl-D-glucosamine residues in chitodextrins.. Has bacteriolytic activity against M.luteus. This is Lysozyme G from Dromaius novaehollandiae (Emu).